The primary structure comprises 125 residues: Urotensin-2 (125 aa).

Positions 1 to 20 (MYKLASCCLLFIGFLNPLFS) are cleaved as a signal peptide. A propeptide spanning residues 21-111 (LPLLDSGEVS…HLLARIRKPY (91 aa)) is cleaved from the precursor. Cysteines 119 and 124 form a disulfide.

It belongs to the urotensin-2 family.

It is found in the secreted. Its function is as follows. Highly potent vasoconstrictor. This chain is Urotensin-2 (UTS2), found in Macaca mulatta (Rhesus macaque).